The following is a 411-amino-acid chain: Citrate synthase (411 aa).

Catalysis depends on residues H304 and D363.

It belongs to the citrate synthase family.

It catalyses the reaction oxaloacetate + acetyl-CoA + H2O = citrate + CoA + H(+). Its pathway is carbohydrate metabolism; tricarboxylic acid cycle; isocitrate from oxaloacetate: step 1/2. The polypeptide is Citrate synthase (gltA) (Rickettsia australis).